We begin with the raw amino-acid sequence, 465 residues long: E3 ubiquitin-protein ligase TRIM38 (465 aa).

The RING-type zinc-finger motif lies at 16 to 63 (CSICLSLMTNPVSINCGHSYCHLCITDFFKNPSQKQLRQETFCCPQCR). At Ser-70 the chain carries Phosphoserine. The B box-type zinc finger occupies 88–129 (DQEMSCEEHGEQFHLFCEDEGQLICWRCERAPQHKGHTTALV). Residues Cys-93, His-96, Cys-115, and His-121 each contribute to the Zn(2+) site. The B30.2/SPRY domain maps to 274 to 465 (CNVSKLYFDV…SPLFLPPPGD (192 aa)).

In terms of assembly, interacts (via B30.2/SPRY domain) with TAB2 and TAB3. Ubiquitous.

The protein localises to the cytoplasm. It carries out the reaction S-ubiquitinyl-[E2 ubiquitin-conjugating enzyme]-L-cysteine + [acceptor protein]-L-lysine = [E2 ubiquitin-conjugating enzyme]-L-cysteine + N(6)-ubiquitinyl-[acceptor protein]-L-lysine.. Its pathway is protein modification; protein ubiquitination. The protein operates within protein modification; protein sumoylation. E3 ubiquitin-protein and E3 SUMO-protein ligase that acts as a regulator of innate immunity. Acts as a negative regulator of type I interferon IFN-beta production by catalyzing 'Lys-48'-linked polyubiquitination of AZI2/NAP1, leading to its degradation. Mediates 'Lys-48'-linked polyubiquitination and proteasomal degradation of the critical TLR adapter TICAM1, inhibiting TLR3-mediated type I interferon signaling. Acts as positive regulator of the cGAS-STING pathway by acting as a E3 SUMO-protein ligase: mediates sumoylation of CGAS and STING, preventing their degradation and thereby activating the innate immune response to DNA virus. Also acts as a negative regulator of NF-kappa-B signaling independently of its E3 protein ligase activity by promoting lysosome-dependent degradation of TAB2 and TAB3 adapters. The polypeptide is E3 ubiquitin-protein ligase TRIM38 (Homo sapiens (Human)).